The following is a 395-amino-acid chain: Phosphoglycerate kinase (395 aa).

Residues Asp21–Asn23, Arg36, His59–Arg62, Arg120, and Arg153 contribute to the substrate site. ATP-binding positions include Lys203, Gly294, Glu325, and Gly351–Ser354.

This sequence belongs to the phosphoglycerate kinase family. In terms of assembly, monomer.

The protein localises to the cytoplasm. The enzyme catalyses (2R)-3-phosphoglycerate + ATP = (2R)-3-phospho-glyceroyl phosphate + ADP. It functions in the pathway carbohydrate degradation; glycolysis; pyruvate from D-glyceraldehyde 3-phosphate: step 2/5. The protein is Phosphoglycerate kinase of Finegoldia magna (strain ATCC 29328 / DSM 20472 / WAL 2508) (Peptostreptococcus magnus).